A 130-amino-acid polypeptide reads, in one-letter code: Small ribosomal subunit protein uS9 (130 aa).

A compositionally biased stretch (basic and acidic residues) spans 101-110 (AGFLTRDPRM). A disordered region spans residues 101 to 130 (AGFLTRDPRMKERKKYGLKKARRAPQFSKR). Residues 111–130 (KERKKYGLKKARRAPQFSKR) show a composition bias toward basic residues.

This sequence belongs to the universal ribosomal protein uS9 family.

The protein is Small ribosomal subunit protein uS9 of Clostridium tetani (strain Massachusetts / E88).